Consider the following 53-residue polypeptide: Snake venom serine protease LmrSP-4 (53 aa).

Cysteines 26 and 42 form a disulfide. The active-site Charge relay system is His41.

As to quaternary structure, monomer. N-glycosylated. As to expression, expressed by the venom gland.

It localises to the secreted. Inhibited by the small molecule serine protease inhibitors phenylmethylsulfonyl fluoride (PMSF) and benzamidine. Functionally, snake venom serine protease that has fibrinogenolytic activity. Hydrolyzes the alpha-chain of fibrinogen (FGA), without affecting the beta- and the gamma-chains. Also displays hydrolytic activity towards S-2302 (plasma kallikrein substrate) and S-2251 (substrate for plasmin), but has no hydrolytic activity with S-2238 (thrombin substrate) or S-2222 (factor Xa). This chain is Snake venom serine protease LmrSP-4, found in Lachesis muta rhombeata (Bushmaster).